A 367-amino-acid chain; its full sequence is GTPase Obg (367 aa).

Residues Met1–Ile158 enclose the Obg domain. The OBG-type G domain occupies Ala159–Lys358. Residues Gly165–Ser172, Phe190–Thr194, Asp212–Gly215, Thr280–Asp283, and Ser339–Val341 each bind GTP. Residues Ser172 and Thr192 each coordinate Mg(2+).

Belongs to the TRAFAC class OBG-HflX-like GTPase superfamily. OBG GTPase family. Monomer. Requires Mg(2+) as cofactor.

The protein resides in the cytoplasm. An essential GTPase which binds GTP, GDP and possibly (p)ppGpp with moderate affinity, with high nucleotide exchange rates and a fairly low GTP hydrolysis rate. Plays a role in control of the cell cycle, stress response, ribosome biogenesis and in those bacteria that undergo differentiation, in morphogenesis control. The chain is GTPase Obg from Nitratiruptor sp. (strain SB155-2).